A 400-amino-acid polypeptide reads, in one-letter code: MIIKPRIRGFICTTTHPVGCEANVLEQINFTKAKGKIANGPKKVLVVGSSSGYGLSSRITAAFGSDAATLGVFFEKPSTETKPGTAGWYNSAAFDKFAKAEGLYSKSINCDAFSHEAKQKAIELIKQDLGQVDMVVYSLASPVRKMPDSGELIRSSLKPIGETYTATAVDTNKDLIIEASVEPATEQEIADTVTVMGGEDWELWMQALSEAGVLSDNCKTVAYSYIGTELTWPIYWHGALGKAKMDLDRAAHALNTKLSVTGGSANVAVLKSVVTQASSAIPVMPLYIAMVFKKMRAEGLHEGCIEQISRMFNERLFKADGTAADVDESNRLRLDDWELREEIQQHCRDMWPQVTTENLAELTDYREYKEEFLKLFGFGVEGIDYEADVNPHVEFDVVSI.

NAD(+) is bound by residues 48 to 53, 74 to 75, 111 to 112, and 139 to 140; these read GSSSGY, FE, DA, and LA. Tyr-225 is a binding site for substrate. Residue Tyr-235 is the Proton donor of the active site. NAD(+)-binding positions include Lys-244 and 273–275; that span reads VVT.

This sequence belongs to the TER reductase family. As to quaternary structure, monomer.

It carries out the reaction a 2,3-saturated acyl-[ACP] + NAD(+) = a (2E)-enoyl-[ACP] + NADH + H(+). It participates in lipid metabolism; fatty acid biosynthesis. Its function is as follows. Involved in the final reduction of the elongation cycle of fatty acid synthesis (FAS II). Catalyzes the reduction of a carbon-carbon double bond in an enoyl moiety that is covalently linked to an acyl carrier protein (ACP). This Shewanella pealeana (strain ATCC 700345 / ANG-SQ1) protein is Enoyl-[acyl-carrier-protein] reductase [NADH].